Here is a 1136-residue protein sequence, read N- to C-terminus: MKKAWAQLERVLQPSSSRVNRALITQQLEALYALPINCEAACRWEDAQRLFLRCNGHRPYYAGIMDQSTDNRLAVASFEENMLALQQRGLVCTTVGDKAPPCVVGGQTSRGLCRRSSIVCVNVGSCADLDLNMHEDCDETLLTLLHGVVVPYLHFRIVYGTGVSPPLVPRAPGPAICGASHDLSLQNELHMDSCVALLHPRGLCSSNCNNKAYRTAATLVRGAVSLATSDTLLHQRQDGCFTLHPDAMKLGSPRLFALQLWWNKEVGPVIQRGVEQSVKTDEVLSGAWIEVARKRVEELVERGGDDLPQPLRNMTRDDVAAFAADATLCWTLSAFDCNYKRLGPAQPACRLQFSEEARLSMALELMQTVKASLVKQPTGIPISELSATVCWPAASAWIGEKSLTEALTQFPAHFNVVNVEGKLVVMHGHLTGPSDNVTAEEVSEWLAAGHSEGLQKPCVAASPSDLTFHRETDLVVRAVAFLRKRHFGNVPVTYGELCGALLPKNNGKNDGDSDTLLNVLLRYDVLAADTAKGDSSINIQCGLRDGDAIRLSVREDRALRALEAFRTTSRSAFQLYTEAIEPFLTCCRGAMRENGSCVVPLTLLERWLQVERLSLQSKELLDILRSAEGPYRIDEELCNVVLTNHTAKGEVLTPAFSLPATPPPPPPPAVSSRLTFEAQISRVLKTQRPDRLLHFVQTILHAVFDLILPHVSAPSGVPVRMLMRRIRWGSFVVTLGSLTSFVEAFDGLFFEVLSNASSHGEEKRDDVDLIVSAYKGPVSPWLLYARLIVRLFPADVDIPLGLIAEALSWSSRFAPMFGDLPSLLRRVGRQCRNGQLLAKVEMVRPVCDQDDACLWELLAKIRREAHLHHLERSSGETGQYVLLSETELYAYLPNDVKGERWNSTVKEEGARCLATMAVHRLPHFFEWHVDNTDTTTRYVRVVLPFSTPPTGVVCFVEEYVCPLLRQHKQTTIAELDEQLGWSHGAFDAHPAGSQAAGGTPSATSLCGLLRRYVESMHSPKIILEPQETTLSPLHHHVHVMPNSAVYTSPEDMLLLLNGLRISNEGITRVLPTHKPVSLFELISQQLDLHQPFREGLTTLERGSRWNVMLACESDSMDDCLQELDNCTGDILVWCEG.

A mitochondrion-targeting transit peptide spans 1-97; sequence MKKAWAQLER…RGLVCTTVGD (97 aa).

As to quaternary structure, component of the mitochondrial 3' processome (MPsome) complex composed at least of terminal uridylyltransferase KRET1/TUT1, 3'-5' exonuclease DSS1, MPSS1, MPSS2 and MPSS3. Within the complex, interacts with KRET1.

The protein resides in the mitochondrion. As part of the mitochondrial 3' processome (MPsome), involved in the maturation of guided RNA (gRNA) precursors. The chain is Mitochondrial 3' processome subunit 3 from Trypanosoma brucei brucei.